Consider the following 591-residue polypeptide: Aspartate--tRNA(Asp/Asn) ligase (591 aa).

Glutamate 175 is an L-aspartate binding site. The segment at 199–202 (QQFK) is aspartate. L-aspartate contacts are provided by arginine 221 and histidine 453. 221–223 (RDE) contributes to the ATP binding site. An ATP-binding site is contributed by glutamate 486. Arginine 493 is an L-aspartate binding site. 538-541 (GIDR) contacts ATP.

It belongs to the class-II aminoacyl-tRNA synthetase family. Type 1 subfamily. In terms of assembly, homodimer.

The protein localises to the cytoplasm. The catalysed reaction is tRNA(Asx) + L-aspartate + ATP = L-aspartyl-tRNA(Asx) + AMP + diphosphate. Functionally, aspartyl-tRNA synthetase with relaxed tRNA specificity since it is able to aspartylate not only its cognate tRNA(Asp) but also tRNA(Asn). Reaction proceeds in two steps: L-aspartate is first activated by ATP to form Asp-AMP and then transferred to the acceptor end of tRNA(Asp/Asn). The polypeptide is Aspartate--tRNA(Asp/Asn) ligase (Jannaschia sp. (strain CCS1)).